Reading from the N-terminus, the 216-residue chain is Cytidylate kinase (216 aa).

7 to 15 contacts ATP; the sequence is GPAGTGKST.

Belongs to the cytidylate kinase family. Type 1 subfamily.

The protein resides in the cytoplasm. The catalysed reaction is CMP + ATP = CDP + ADP. It catalyses the reaction dCMP + ATP = dCDP + ADP. This Chlamydia muridarum (strain MoPn / Nigg) protein is Cytidylate kinase.